Here is a 150-residue protein sequence, read N- to C-terminus: 3-hydroxyacyl-[acyl-carrier-protein] dehydratase FabZ (150 aa).

Residue His53 is part of the active site.

The protein belongs to the thioester dehydratase family. FabZ subfamily.

Its subcellular location is the cytoplasm. It catalyses the reaction a (3R)-hydroxyacyl-[ACP] = a (2E)-enoyl-[ACP] + H2O. Its function is as follows. Involved in unsaturated fatty acids biosynthesis. Catalyzes the dehydration of short chain beta-hydroxyacyl-ACPs and long chain saturated and unsaturated beta-hydroxyacyl-ACPs. In Proteus mirabilis (strain HI4320), this protein is 3-hydroxyacyl-[acyl-carrier-protein] dehydratase FabZ.